We begin with the raw amino-acid sequence, 111 residues long: Auxin-repressed 12.5 kDa protein (111 aa).

The tract at residues Glu-18 to Arg-111 is disordered. Over residues Thr-43–Pro-57 the composition is skewed to low complexity. Residues Ser-74–Thr-95 are compositionally biased toward polar residues.

This sequence belongs to the DRM1/ARP family.

In Fragaria ananassa (Strawberry), this protein is Auxin-repressed 12.5 kDa protein.